The chain runs to 351 residues: Cytosolic sulfotransferase 9 (351 aa).

Over residues 1–11 the composition is skewed to basic and acidic residues; that stretch reads MDEKDILRNLR. Positions 1 to 24 are disordered; that stretch reads MDEKDILRNLREEEEEEEENQSEE. Positions 12–22 are enriched in acidic residues; it reads EEEEEEEENQS. 80–85 serves as a coordination point for 3'-phosphoadenylyl sulfate; that stretch reads KSGTTW. The active-site Proton acceptor is H152. 3'-phosphoadenylyl sulfate-binding positions include R174, S182, Y252, and 317–319; that span reads RKG.

The protein belongs to the sulfotransferase 1 family. In terms of tissue distribution, expressed in roots and leaves.

Its subcellular location is the cytoplasm. Functionally, sulfotransferase that utilizes 3'-phospho-5'-adenylyl sulfate (PAPS) as sulfonate donor. No activity with brassinosteroids. The protein is Cytosolic sulfotransferase 9 (STO9) of Arabidopsis thaliana (Mouse-ear cress).